A 276-amino-acid chain; its full sequence is Palmitoyltransferase ZDHHC22 (276 aa).

At 1 to 9 (MGKLKLLNT) the chain is on the cytoplasmic side. The chain crosses the membrane as a helical span at residues 10–30 (IAPAYFYAATVVTFALHFLLF). Residues 31–45 (TPTIFQSSDVTINPA) are Lumenal-facing. A helical membrane pass occupies residues 46-66 (MLAHISIFLFLMGNALGNYIM). The Cytoplasmic portion of the chain corresponds to 67-131 (TIRNPSESAN…NCIGNRNMRY (65 aa)). The DHHC domain occupies 101–137 (HFCKVCKKVILKRDHHCFFTGNCIGNRNMRYFIMFSI). C117 (S-palmitoyl cysteine intermediate) is an active-site residue. Residues 132–152 (FIMFSIYTSSSCLYSLVIGVA) traverse the membrane as a helical segment. Residues 153 to 165 (YLTIEYSISFENP) are Lumenal-facing. A helical transmembrane segment spans residues 166-186 (LTFLTLLPLSTGYFFLGLISG). Topologically, residues 187–188 (LQ) are cytoplasmic. Residues 189–209 (FFLVIMLYIWLGIGLVSVGFC) traverse the membrane as a helical segment. The Lumenal portion of the chain corresponds to 210–276 (CQQLLLVARG…WQVYHDHKHD (67 aa)).

This sequence belongs to the DHHC palmitoyltransferase family.

It is found in the endoplasmic reticulum membrane. The protein resides in the golgi apparatus membrane. It carries out the reaction L-cysteinyl-[protein] + hexadecanoyl-CoA = S-hexadecanoyl-L-cysteinyl-[protein] + CoA. Its function is as follows. Palmitoyltransferase that could catalyze the addition of palmitate onto various protein substrates and be involved in a variety of cellular processes. In Danio rerio (Zebrafish), this protein is Palmitoyltransferase ZDHHC22 (zdhhc22).